The sequence spans 454 residues: Tyrosine aminotransferase (454 aa).

Met-1 is modified (N-acetylmethionine). Lys-280 is subject to N6-(pyridoxal phosphate)lysine. Ser-448 bears the Phosphoserine mark.

Belongs to the class-I pyridoxal-phosphate-dependent aminotransferase family. As to quaternary structure, homodimer. It depends on pyridoxal 5'-phosphate as a cofactor.

It catalyses the reaction L-tyrosine + 2-oxoglutarate = 3-(4-hydroxyphenyl)pyruvate + L-glutamate. Its pathway is amino-acid degradation; L-phenylalanine degradation; acetoacetate and fumarate from L-phenylalanine: step 2/6. Its function is as follows. Transaminase involved in tyrosine breakdown. Converts tyrosine to p-hydroxyphenylpyruvate. Can catalyze the reverse reaction, using glutamic acid, with 2-oxoglutarate as cosubstrate (in vitro). Has much lower affinity and transaminase activity for phenylalanine. This is Tyrosine aminotransferase (Tat) from Mus musculus (Mouse).